The chain runs to 210 residues: Thymidylate kinase (210 aa).

10–17 (GPDGAGKT) lines the ATP pocket.

This sequence belongs to the thymidylate kinase family.

It catalyses the reaction dTMP + ATP = dTDP + ADP. Phosphorylation of dTMP to form dTDP in both de novo and salvage pathways of dTTP synthesis. In Geobacillus sp. (strain WCH70), this protein is Thymidylate kinase.